The primary structure comprises 309 residues: Aspartate carbamoyltransferase catalytic subunit (309 aa).

The carbamoyl phosphate site is built by Arg55 and Thr56. Residue Lys85 participates in L-aspartate binding. The carbamoyl phosphate site is built by Arg106, His135, and Gln138. The L-aspartate site is built by Arg168 and Arg230. Leu268 and Pro269 together coordinate carbamoyl phosphate.

It belongs to the aspartate/ornithine carbamoyltransferase superfamily. ATCase family. Heterododecamer (2C3:3R2) of six catalytic PyrB chains organized as two trimers (C3), and six regulatory PyrI chains organized as three dimers (R2).

The catalysed reaction is carbamoyl phosphate + L-aspartate = N-carbamoyl-L-aspartate + phosphate + H(+). It functions in the pathway pyrimidine metabolism; UMP biosynthesis via de novo pathway; (S)-dihydroorotate from bicarbonate: step 2/3. Its function is as follows. Catalyzes the condensation of carbamoyl phosphate and aspartate to form carbamoyl aspartate and inorganic phosphate, the committed step in the de novo pyrimidine nucleotide biosynthesis pathway. In Vibrio campbellii (strain ATCC BAA-1116), this protein is Aspartate carbamoyltransferase catalytic subunit.